A 491-amino-acid polypeptide reads, in one-letter code: Bifunctional protein HldE (491 aa).

The ribokinase stretch occupies residues 1–330 (MDRKMVESLF…AAVSLEHRDS (330 aa)). Residue 205 to 208 (NRKE) coordinates ATP. Asp275 is a catalytic residue. Positions 356–491 (FTNGCFDLLH…KVLERYTDEQ (136 aa)) are cytidylyltransferase.

It in the N-terminal section; belongs to the carbohydrate kinase PfkB family. The protein in the C-terminal section; belongs to the cytidylyltransferase family. As to quaternary structure, homodimer.

It catalyses the reaction D-glycero-beta-D-manno-heptose 7-phosphate + ATP = D-glycero-beta-D-manno-heptose 1,7-bisphosphate + ADP + H(+). It carries out the reaction D-glycero-beta-D-manno-heptose 1-phosphate + ATP + H(+) = ADP-D-glycero-beta-D-manno-heptose + diphosphate. It functions in the pathway nucleotide-sugar biosynthesis; ADP-L-glycero-beta-D-manno-heptose biosynthesis; ADP-L-glycero-beta-D-manno-heptose from D-glycero-beta-D-manno-heptose 7-phosphate: step 1/4. It participates in nucleotide-sugar biosynthesis; ADP-L-glycero-beta-D-manno-heptose biosynthesis; ADP-L-glycero-beta-D-manno-heptose from D-glycero-beta-D-manno-heptose 7-phosphate: step 3/4. Its function is as follows. Catalyzes the phosphorylation of D-glycero-D-manno-heptose 7-phosphate at the C-1 position to selectively form D-glycero-beta-D-manno-heptose-1,7-bisphosphate. Functionally, catalyzes the ADP transfer from ATP to D-glycero-beta-D-manno-heptose 1-phosphate, yielding ADP-D-glycero-beta-D-manno-heptose. The polypeptide is Bifunctional protein HldE (Trichlorobacter lovleyi (strain ATCC BAA-1151 / DSM 17278 / SZ) (Geobacter lovleyi)).